A 683-amino-acid polypeptide reads, in one-letter code: Inositol-trisphosphate 3-kinase C (683 aa).

The disordered stretch occupies residues Met1–Leu124. The segment covering Ala13 to Ala22 has biased composition (low complexity). The segment covering Pro44–Pro58 has biased composition (gly residues). The segment covering Glu105 to Leu124 has biased composition (basic and acidic residues). Phosphoserine occurs at positions 127 and 162. Positions Thr147–Pro308 are disordered. Over residues Trp196–Thr206 the composition is skewed to polar residues. The segment covering Ser249–Arg259 has biased composition (basic and acidic residues). Residues Phe267–Pro289 are compositionally biased toward polar residues. Over residues Glu297–Pro308 the composition is skewed to acidic residues. A Nuclear export signal motif is present at residues Leu324–Ile332. The tract at residues Pro334–Lys387 is disordered. The residue at position 336 (Thr336) is a Phosphothreonine. Residue Ser404 is modified to Phosphoserine. ATP-binding positions include Lys431, Glu471 to Leu473, and Asp484. Substrate contacts are provided by residues Lys486, Arg507–Lys513, and Lys534–Arg541. The interval Asp509–Val517 is calmodulin-binding. Residues Lys558 and Asp638 each contribute to the ATP site. Residue Lys641 coordinates substrate.

This sequence belongs to the inositol phosphokinase (IPK) family. As to expression, highly expressed in pancreas, skeletal muscle, liver, placenta and weakly in kidney and brain.

Its subcellular location is the nucleus. The protein resides in the cytoplasm. The enzyme catalyses 1D-myo-inositol 1,4,5-trisphosphate + ATP = 1D-myo-inositol 1,3,4,5-tetrakisphosphate + ADP + H(+). Activated by calcium/calmodulin. Inhibited by high concentrations of the substrate Ins(1,2,4)P3, and allosterically activated by the product Ins(1,3,4,5)P4. Its function is as follows. Catalyzes the phosphorylation of 1D-myo-inositol 1,4,5-trisphosphate (InsP3) into 1D-myo-inositol 1,3,4,5-tetrakisphosphate and participates to the regulation of calcium homeostasis. Can phosphorylate inositol 2,4,5-triphosphate to inositol 2,4,5,6-tetraphosphate. The protein is Inositol-trisphosphate 3-kinase C of Homo sapiens (Human).